A 542-amino-acid chain; its full sequence is Homeobox protein ceh-18 (542 aa).

Positions 243–252 (NTPTQPTASL) are enriched in polar residues. The interval 243–264 (NTPTQPTASLTPKKAENRPPVV) is disordered. In terms of domain architecture, POU-specific spans 290-364 (DDRIDMNELE…LLKEWLADVE (75 aa)). Positions 421–480 (RRRKRTNLDMNQRNALDTFFALNPRPDHDKMTDIANSLELDRDVVRVWFCNRRQKMRRVD) form a DNA-binding region, homeobox. The disordered stretch occupies residues 514–542 (LASCQASNDDSDGTSGSPDAPSNDGCSDL). Over residues 517-530 (CQASNDDSDGTSGS) the composition is skewed to polar residues.

This sequence belongs to the POU transcription factor family. In terms of assembly, interacts with akir-1. In terms of tissue distribution, expressed in the gonadal sheath cells that signal the oocyte, but not in the oocyte.

It localises to the nucleus. Its function is as follows. Directs gonadal sheath cell differentiation and function. Also directs gonad migration and plays a role in specifying the differentiated phenotypes of epidermal cells during postembryonic development. Plays a role in oogenesis, regulating a sheath cell signal that causes oocytes to maintain diakinesis arrest during meiosis. Negatively regulates oocyte maturation, ovulation and MAPK activation in oocytes when sperm are not available for fertilization. May be recruited by akir-1 to the promoter regions of antimicrobial peptide genes to control gene expression in response to fungal infection. The sequence is that of Homeobox protein ceh-18 from Caenorhabditis elegans.